A 64-amino-acid chain; its full sequence is Putative antitoxin VapB1 (64 aa).

Functionally, possibly the antitoxin component of a type II toxin-antitoxin (TA) system. Its cognate toxin is VapC1 (Potential). The protein is Putative antitoxin VapB1 (vapB1) of Methanocaldococcus jannaschii (strain ATCC 43067 / DSM 2661 / JAL-1 / JCM 10045 / NBRC 100440) (Methanococcus jannaschii).